A 101-amino-acid polypeptide reads, in one-letter code: MAKQSMKAREVKRVKLANKFYAQRIALKNTITNLKLSEEERWDAVLKLQIFPRDSSPSRQRNRCRQTGRPHAFLRKFGLSRIKVREAAMKGEIPGLKKASW.

This sequence belongs to the universal ribosomal protein uS14 family. Part of the 30S ribosomal subunit. Contacts proteins S3 and S10.

Functionally, binds 16S rRNA, required for the assembly of 30S particles and may also be responsible for determining the conformation of the 16S rRNA at the A site. The protein is Small ribosomal subunit protein uS14 of Buchnera aphidicola subsp. Schizaphis graminum (strain Sg).